Reading from the N-terminus, the 343-residue chain is MKNSQAVTSLTWWSVVVAYIVSTNSRLYIGWFGVLLFPLIAVSTVAYVAAFILAPPVDIDGIREPVSGSLLYSNNIITGAVIPSSNAIGVHFYPVWEAISNNEWLYNGGTYQFVVLHFLAAVLAWLGREYEYSFRLGMRPWIYLAFSAPVVAASAVFVVYPIGQGSFSDGMPLGISGTFNFMLVFQAEHNILMHPFHILGVSAVFGGSLFSAMHGSLVTSSLLSETASYDSLNAGYVFGQEDETYAISAAHGYFGRLLFQYGSFNNSRSLHFFLAAWPVIGIWCTAIGVSTMAFNLNGLNFNQSLLDSSGHVVNSWADVVNRADLGMEVMHERNTHNFPLDLA.

3 helical membrane-spanning segments follow: residues 28 to 45 (YIGW…VSTV), 117 to 132 (HFLA…EYEY), and 141 to 155 (WIYL…AASA). Position 117 (histidine 117) interacts with chlorophyll a. Residue tryptophan 125 participates in pheophytin a binding. [CaMn4O5] cluster-binding residues include aspartate 169 and glutamate 188. A helical transmembrane segment spans residues 196–217 (FHILGVSAVFGGSLFSAMHGSL). Position 197 (histidine 197) interacts with chlorophyll a. Residues histidine 214 and 263-264 (SF) contribute to the a quinone site. Histidine 214 contributes to the Fe cation binding site. Histidine 271 is a Fe cation binding site. Residues 273–287 (FLAAWPVIGIWCTAI) traverse the membrane as a helical segment. [CaMn4O5] cluster is bound by residues histidine 331, glutamate 332, aspartate 341, and alanine 343.

Belongs to the reaction center PufL/M/PsbA/D family. As to quaternary structure, PSII is composed of 1 copy each of membrane proteins PsbA, PsbB, PsbC, PsbD, PsbE, PsbF, PsbH, PsbI, PsbJ, PsbK, PsbL, PsbM, PsbT, PsbX, PsbY, PsbZ, Psb30/Ycf12, at least 3 peripheral proteins of the oxygen-evolving complex and a large number of cofactors. It forms dimeric complexes. The D1/D2 heterodimer binds P680, chlorophylls that are the primary electron donor of PSII, and subsequent electron acceptors. It shares a non-heme iron and each subunit binds pheophytin, quinone, additional chlorophylls, carotenoids and lipids. D1 provides most of the ligands for the Mn4-Ca-O5 cluster of the oxygen-evolving complex (OEC). There is also a Cl(-1) ion associated with D1 and D2, which is required for oxygen evolution. The PSII complex binds additional chlorophylls, carotenoids and specific lipids. serves as cofactor. In terms of processing, tyr-160 forms a radical intermediate that is referred to as redox-active TyrZ, YZ or Y-Z.

It is found in the plastid. The protein localises to the chloroplast thylakoid membrane. The enzyme catalyses 2 a plastoquinone + 4 hnu + 2 H2O = 2 a plastoquinol + O2. Its function is as follows. Photosystem II (PSII) is a light-driven water:plastoquinone oxidoreductase that uses light energy to abstract electrons from H(2)O, generating O(2) and a proton gradient subsequently used for ATP formation. It consists of a core antenna complex that captures photons, and an electron transfer chain that converts photonic excitation into a charge separation. The D1/D2 (PsbA/PsbD) reaction center heterodimer binds P680, the primary electron donor of PSII as well as several subsequent electron acceptors. This is Photosystem II protein D1 from Prorocentrum micans (Red tide dinoflagellate).